The chain runs to 603 residues: MAMFTTMTALTLTSLIPPITATLINPNKKNSYPHYVKTAIASAFTISLIPTTMFICLGQETIITNWCWTTTQTLQLSLSFKLDYFSMTFLPVALFVTWSIMEFSLWYMASDPNINQFFKYLLIFLITMIILITANNLLQLFIGWEGVGIMSFLLISWWYARTDANTAAIQAILYNRIGDIGFILTLAWFLLHSNSWELQQVFLLNNNPNLLPLLGLLLAAAGKSAQLGLHPWLPSAMEGPTPVSALLHSSTMVVAGIFLLIRFHPLMENNPPIQTLALCLGAITTLFAAICALTQNDIKKIVAFSTSSQLGLMMVTIGINQPHLAFLHICTHAFFKALLFMCSGSIIHNLNNEQDIRKMGGLLKTMPLTSTSLTISSLALAGMPFLSGFYSKDLIIETASMSYTNAWALSITLIATSLTSAYSTRMILHTLTGKPLLPTPISINENNPTLLNPIKRLMTGSLFTGFLITSNIPPTSLPQTTTPLYLKLAALTATLLGLLVALDLNYLANKLKVKTPPPAFYFSTMLGFYPNIIHRMIPHLSLLMSQNLSLLLLDLTWLEKLMPKAISQHQTSASTTISTQKGMIKLYFLSFLIPLLLTLLMIS.

16 consecutive transmembrane segments (helical) span residues 4 to 24 (FTTMTALTLTSLIPPITATLI), 38 to 58 (TAIASAFTISLIPTTMFICLG), 89 to 109 (FLPVALFVTWSIMEFSLWYMA), 122 to 142 (LIFLITMIILITANNLLQLFI), 171 to 191 (AILYNRIGDIGFILTLAWFLL), 211 to 233 (LPLLGLLLAAAGKSAQLGLHPWL), 241 to 261 (TPVSALLHSSTMVVAGIFLLI), 273 to 293 (IQTLALCLGAITTLFAAICAL), 301 to 320 (IVAFSTSSQLGLMMVTIGIN), 325 to 347 (AFLHICTHAFFKALLFMCSGSII), 366 to 386 (MPLTSTSLTISSLALAGMPFL), 405 to 424 (NAWALSITLIATSLTSAYST), 457 to 477 (LMTGSLFTGFLITSNIPPTSL), 488 to 508 (LAALTATLLGLLVALDLNYLA), 537 to 557 (IPHLSLLMSQNLSLLLLDLTW), and 582 to 602 (GMIKLYFLSFLIPLLLTLLMI).

This sequence belongs to the complex I subunit 5 family. In terms of assembly, core subunit of respiratory chain NADH dehydrogenase (Complex I) which is composed of 45 different subunits.

Its subcellular location is the mitochondrion inner membrane. The catalysed reaction is a ubiquinone + NADH + 5 H(+)(in) = a ubiquinol + NAD(+) + 4 H(+)(out). Its function is as follows. Core subunit of the mitochondrial membrane respiratory chain NADH dehydrogenase (Complex I) which catalyzes electron transfer from NADH through the respiratory chain, using ubiquinone as an electron acceptor. Essential for the catalytic activity and assembly of complex I. The protein is NADH-ubiquinone oxidoreductase chain 5 (MT-ND5) of Pongo pygmaeus (Bornean orangutan).